The sequence spans 508 residues: MNPGDFKDFAKAMTDYITEYLENIRDRQVVPSVKPGYLRPLVPEQAPQQAEPWTAVMADIERVVMSGVTHWQSPRFHAYFPTANSYPSIVADMLSGAIACIGFTWIASPACTELEVVMLDWLGQMLGLPDQFLARSGGEGGGVIQGTASEATFVALLGAKSRMMHRVKEQHPEWTETDILGKLVGYCNQQAHSSVERAGLLGGVKLRSLKPDSKRRLRGDTLREAIDEDIRNGLIPFYVVATLGTTSSCAFDALDEIGDVCNASDIWLHVDAAYAGSAFICPEYRHFMKGVEKADSFNFNPHKWMLVNFDCSAMWLKQPRWIVDAFNVDPLYLKHEQQGSAPDYRHWQIPLGRRFRSLKLWFVLRLYGVENLQKYIRKQIGFAHLFERLLTSDERFELFEEVTMGLVCFRLKGSNEINEELLRRINGRGKIHLVPSKVDDVYFLRLAICSRFTEESDMHVSWEEIKDRLMMFLKSKGAVLIKIICSTTRRTKNILTYIKQNIFRDVGL.

Threonine 82 contributes to the substrate binding site. Alanine 148 and serine 149 together coordinate pyridoxal 5'-phosphate. Substrate is bound at residue histidine 192. Threonine 246 and asparagine 300 together coordinate pyridoxal 5'-phosphate. Lysine 303 is modified (N6-(pyridoxal phosphate)lysine).

Belongs to the group II decarboxylase family. Homodimer. Pyridoxal 5'-phosphate serves as cofactor.

It carries out the reaction L-dopa + H(+) = dopamine + CO2. The catalysed reaction is 5-hydroxy-L-tryptophan + H(+) = serotonin + CO2. In terms of biological role, catalyzes the decarboxylation of L-3,4-dihydroxyphenylalanine (DOPA) to dopamine, L-5-hydroxytryptophan to serotonin and L-tryptophan to tryptamine. This is Aromatic-L-amino-acid decarboxylase (Ddc) from Manduca sexta (Tobacco hawkmoth).